A 297-amino-acid polypeptide reads, in one-letter code: Large ribosomal subunit protein uL18 (297 aa).

Residue Gly-2 is modified to N-acetylglycine. Residues Lys-5 and Lys-48 each carry the N6-acetyllysine modification. The residue at position 185 (Ser-185) is a Phosphoserine. At Lys-220 the chain carries N6-acetyllysine; alternate. A Glycyl lysine isopeptide (Lys-Gly) (interchain with G-Cter in SUMO1); alternate cross-link involves residue Lys-220. Lys-220 participates in a covalent cross-link: Glycyl lysine isopeptide (Lys-Gly) (interchain with G-Cter in SUMO2); alternate. Thr-232 carries the post-translational modification Phosphothreonine. A disordered region spans residues 252-297; the sequence is VYEKKPKKEVKKKRWNRPKMSLAQKKDRVAQKKASFLRAQERAAES. Residues 258–268 show a composition bias toward basic residues; sequence KKEVKKKRWNR. The residue at position 272 (Ser-272) is a Phosphoserine.

It belongs to the universal ribosomal protein uL18 family. As to quaternary structure, component of the large ribosomal subunit (LSU). Part of the 5S RNP complex, which is a LSU subcomplex composed of the 5S RNA, RPL5 and RPL11. Component of a hexameric 5S RNP precursor complex, composed of 5S RNA, RRS1, RPF2/BXDC1, RPL5, RPL11 and HEATR3; this complex acts as a precursor for ribosome assembly. Interacts with NVL in an ATP-dependent manner. Interacts with RRP1B. Interacts with IPO5, IPO7 and KPNB1; these interactions may be involved in RPL5 nuclear import for the assembly of ribosomal subunits.

It is found in the cytoplasm. It localises to the nucleus. The protein localises to the nucleolus. In terms of biological role, component of the ribosome, a large ribonucleoprotein complex responsible for the synthesis of proteins in the cell. The small ribosomal subunit (SSU) binds messenger RNAs (mRNAs) and translates the encoded message by selecting cognate aminoacyl-transfer RNA (tRNA) molecules. The large subunit (LSU) contains the ribosomal catalytic site termed the peptidyl transferase center (PTC), which catalyzes the formation of peptide bonds, thereby polymerizing the amino acids delivered by tRNAs into a polypeptide chain. The nascent polypeptides leave the ribosome through a tunnel in the LSU and interact with protein factors that function in enzymatic processing, targeting, and the membrane insertion of nascent chains at the exit of the ribosomal tunnel. As part of the 5S RNP/5S ribonucleoprotein particle it is an essential component of the LSU, required for its formation and the maturation of rRNAs. It also couples ribosome biogenesis to p53/TP53 activation. As part of the 5S RNP it accumulates in the nucleoplasm and inhibits MDM2, when ribosome biogenesis is perturbed, mediating the stabilization and the activation of TP53. This Bos taurus (Bovine) protein is Large ribosomal subunit protein uL18 (RPL5).